Here is a 238-residue protein sequence, read N- to C-terminus: Large ribosomal subunit protein uL2 (238 aa).

A disordered region spans residues 200–238; sequence HGGGLHQSVSRPSTVSRNAPPGRKVGHIAARRTGRKEGK. Residues 206–216 are compositionally biased toward polar residues; sequence QSVSRPSTVSR. Residues 223-238 show a composition bias toward basic residues; the sequence is KVGHIAARRTGRKEGK.

This sequence belongs to the universal ribosomal protein uL2 family. Part of the 50S ribosomal subunit. Forms a bridge to the 30S subunit in the 70S ribosome.

In terms of biological role, one of the primary rRNA binding proteins. Required for association of the 30S and 50S subunits to form the 70S ribosome, for tRNA binding and peptide bond formation. It has been suggested to have peptidyltransferase activity; this is somewhat controversial. Makes several contacts with the 16S rRNA in the 70S ribosome. The protein is Large ribosomal subunit protein uL2 of Saccharolobus islandicus (strain Y.N.15.51 / Yellowstone #2) (Sulfolobus islandicus).